We begin with the raw amino-acid sequence, 176 residues long: Disulfide bond formation protein B (176 aa).

Residues 1–14 (MMRSLNRCSKHRAA) lie on the Cytoplasmic side of the membrane. A helical membrane pass occupies residues 15–31 (WLLLALTTFSLELVALY). Topologically, residues 32-49 (FQHVMLLKPCVLCVYQRC) are periplasmic. An intrachain disulfide couples Cys41 to Cys44. A helical membrane pass occupies residues 50 to 65 (ALYGVVAAGLVGAIAP). Topologically, residues 66 to 71 (ATPLRF) are cytoplasmic. The helical transmembrane segment at 72–89 (SGLAIWLYSAWEGLQLAM) threads the bilayer. Residues 90–144 (KHTDIQLHPSPFVTCDFFVSFPAWLPLDKWLPSVFSASGDCAVRQWHFLSLEMPQ) lie on the Periplasmic side of the membrane. Residues Cys104 and Cys130 are joined by a disulfide bond. Residues 145–163 (WMIVIFGAYLAVAVLILLA) traverse the membrane as a helical segment. The Cytoplasmic portion of the chain corresponds to 164–176 (QFFPPRKRDLFSR).

This sequence belongs to the DsbB family.

It is found in the cell inner membrane. Functionally, required for disulfide bond formation in some periplasmic proteins. Acts by oxidizing the DsbA protein. This is Disulfide bond formation protein B from Sodalis glossinidius (strain morsitans).